A 306-amino-acid polypeptide reads, in one-letter code: Esterase tropF (306 aa).

Residues Ser-147, Asp-248, and His-276 each act as charge relay system in the active site.

It belongs to the LovG family.

It functions in the pathway secondary metabolite biosynthesis. In terms of biological role, esterase; part of the gene cluster that mediates the biosynthesis of the tropolone class of fungal maleic anhydrides. The pathway begins with the synthesis of 3-methylorcinaldehyde by the non-reducing polyketide synthase (PKS) tropA. 3-methylorcinaldehyde is the substrate for the FAD-dependent monooxygenase tropB to yield a dearomatized hydroxycyclohexadione. The 2-oxoglutarate-dependent dioxygenase tropC then performs the oxidative ring expansion to provide the first tropolone metabolite stipitaldehyde. Trop D converts stipitaldehyde into stipitacetal which is in turn converted to stipitalide by the short-chain dehydrogenase/reductase tropE. The next steps involve tropF, tropG, tropH, tropI and tropJ to form successive tropolone maleic anhydrides including stipitaldehydic, stipitatonic and stipitatic acids. This chain is Esterase tropF, found in Talaromyces stipitatus (strain ATCC 10500 / CBS 375.48 / QM 6759 / NRRL 1006) (Penicillium stipitatum).